The sequence spans 109 residues: Nucleoid-associated protein HAPS_1040 (109 aa).

Residues 1–21 are disordered; sequence MFGKGGLGGLMKQAQQMQERM. Residues 10-19 show a composition bias toward low complexity; it reads LMKQAQQMQE.

It belongs to the YbaB/EbfC family. In terms of assembly, homodimer.

The protein localises to the cytoplasm. It is found in the nucleoid. In terms of biological role, binds to DNA and alters its conformation. May be involved in regulation of gene expression, nucleoid organization and DNA protection. The polypeptide is Nucleoid-associated protein HAPS_1040 (Glaesserella parasuis serovar 5 (strain SH0165) (Haemophilus parasuis)).